The chain runs to 396 residues: Tryptophan synthase beta chain (396 aa).

Lysine 86 carries the post-translational modification N6-(pyridoxal phosphate)lysine.

This sequence belongs to the TrpB family. Tetramer of two alpha and two beta chains. Requires pyridoxal 5'-phosphate as cofactor.

It carries out the reaction (1S,2R)-1-C-(indol-3-yl)glycerol 3-phosphate + L-serine = D-glyceraldehyde 3-phosphate + L-tryptophan + H2O. It functions in the pathway amino-acid biosynthesis; L-tryptophan biosynthesis; L-tryptophan from chorismate: step 5/5. In terms of biological role, the beta subunit is responsible for the synthesis of L-tryptophan from indole and L-serine. This is Tryptophan synthase beta chain from Vibrio campbellii (strain ATCC BAA-1116).